The chain runs to 1006 residues: Unconventional myosin-Id (1006 aa).

Residue Ala-2 is modified to N-acetylalanine. The Myosin motor domain occupies 9–695 (FGKADFVLMD…TLFTLEELRA (687 aa)). 102-109 (GESGAGKT) contributes to the ATP binding site. At Ser-200 the chain carries Phosphoserine. A Phosphotyrosine modification is found at Tyr-536. The segment at 572–594 (MIALVDNLASKEPYYVRCIKPND) is actin-binding. 2 IQ domains span residues 699 to 719 (VRVV…MRYK) and 721 to 741 (TKAA…SYIH). One can recognise a TH1 domain in the interval 812 to 1005 (GQRADLGLQR…RSGFILSVPG (194 aa)).

Belongs to the TRAFAC class myosin-kinesin ATPase superfamily. Myosin family. In terms of assembly, interacts (via the two IQ motifs) with calmodulin. Binds an additional calmodulin chain via a third, C-terminal region. Interacts with F-actin. As to expression, detected in enterocytes at the intestinal brush border membrane. Detected at the tip of intestinal microvilli (at protein level).

It localises to the cytoplasm. Its subcellular location is the perikaryon. The protein resides in the cell projection. The protein localises to the dendrite. It is found in the early endosome. It localises to the cell cortex. Its subcellular location is the basolateral cell membrane. In terms of biological role, unconventional myosin that functions as actin-based motor protein with ATPase activity. Plays a role in endosomal protein trafficking, and especially in the transfer of cargo proteins from early to recycling endosomes. Required for normal planar cell polarity in ciliated tracheal cells, for normal rotational polarity of cilia, and for coordinated, unidirectional ciliary movement in the trachea. Required for normal, polarized cilia organization in brain ependymal epithelial cells. This chain is Unconventional myosin-Id, found in Mus musculus (Mouse).